The chain runs to 345 residues: Dihydroorotase (345 aa).

Zn(2+) contacts are provided by His13 and His15. Substrate-binding positions include 15–17 (HLR) and Asn41. Residues Lys99, His136, and His174 each contribute to the Zn(2+) site. Lys99 bears the N6-carboxylysine mark. A substrate-binding site is contributed by His136. Leu219 is a binding site for substrate. Asp247 is a binding site for Zn(2+). The active site involves Asp247. His251 and Ala263 together coordinate substrate.

The protein belongs to the metallo-dependent hydrolases superfamily. DHOase family. Class II DHOase subfamily. As to quaternary structure, homodimer. Zn(2+) is required as a cofactor.

The enzyme catalyses (S)-dihydroorotate + H2O = N-carbamoyl-L-aspartate + H(+). The protein operates within pyrimidine metabolism; UMP biosynthesis via de novo pathway; (S)-dihydroorotate from bicarbonate: step 3/3. Functionally, catalyzes the reversible cyclization of carbamoyl aspartate to dihydroorotate. The polypeptide is Dihydroorotase (Hahella chejuensis (strain KCTC 2396)).